A 350-amino-acid polypeptide reads, in one-letter code: tRNA-splicing endonuclease (350 aa).

Residues Y286, H297, and K328 contribute to the active site.

This sequence belongs to the tRNA-intron endonuclease family. Archaeal long subfamily. Homodimer.

The catalysed reaction is pretRNA = a 3'-half-tRNA molecule with a 5'-OH end + a 5'-half-tRNA molecule with a 2',3'-cyclic phosphate end + an intron with a 2',3'-cyclic phosphate and a 5'-hydroxyl terminus.. In terms of biological role, endonuclease that removes tRNA introns. Cleaves pre-tRNA at the 5'- and 3'-splice sites to release the intron. The products are an intron and two tRNA half-molecules bearing 2',3' cyclic phosphate and 5'-OH termini. Recognizes a pseudosymmetric substrate in which 2 bulged loops of 3 bases are separated by a stem of 4 bp. The polypeptide is tRNA-splicing endonuclease (Methanosarcina barkeri (strain Fusaro / DSM 804)).